A 336-amino-acid polypeptide reads, in one-letter code: Holliday junction branch migration complex subunit RuvB (336 aa).

Residues 4–184 (ADRLISAGTT…FGIVQRLEFY (181 aa)) are large ATPase domain (RuvB-L). Residues I23, R24, G65, K68, T69, T70, 131 to 133 (EDY), R174, Y184, and R221 contribute to the ATP site. T69 contributes to the Mg(2+) binding site. Residues 185–255 (QVPDLQYIVS…IAAQALDMLN (71 aa)) form a small ATPAse domain (RuvB-S) region. Positions 258–336 (AEGFDYMDRK…HFGITPPEMP (79 aa)) are head domain (RuvB-H). Positions 294, 313, and 318 each coordinate DNA.

The protein belongs to the RuvB family. Homohexamer. Forms an RuvA(8)-RuvB(12)-Holliday junction (HJ) complex. HJ DNA is sandwiched between 2 RuvA tetramers; dsDNA enters through RuvA and exits via RuvB. An RuvB hexamer assembles on each DNA strand where it exits the tetramer. Each RuvB hexamer is contacted by two RuvA subunits (via domain III) on 2 adjacent RuvB subunits; this complex drives branch migration. In the full resolvosome a probable DNA-RuvA(4)-RuvB(12)-RuvC(2) complex forms which resolves the HJ.

The protein resides in the cytoplasm. It catalyses the reaction ATP + H2O = ADP + phosphate + H(+). Its function is as follows. The RuvA-RuvB-RuvC complex processes Holliday junction (HJ) DNA during genetic recombination and DNA repair, while the RuvA-RuvB complex plays an important role in the rescue of blocked DNA replication forks via replication fork reversal (RFR). RuvA specifically binds to HJ cruciform DNA, conferring on it an open structure. The RuvB hexamer acts as an ATP-dependent pump, pulling dsDNA into and through the RuvAB complex. RuvB forms 2 homohexamers on either side of HJ DNA bound by 1 or 2 RuvA tetramers; 4 subunits per hexamer contact DNA at a time. Coordinated motions by a converter formed by DNA-disengaged RuvB subunits stimulates ATP hydrolysis and nucleotide exchange. Immobilization of the converter enables RuvB to convert the ATP-contained energy into a lever motion, pulling 2 nucleotides of DNA out of the RuvA tetramer per ATP hydrolyzed, thus driving DNA branch migration. The RuvB motors rotate together with the DNA substrate, which together with the progressing nucleotide cycle form the mechanistic basis for DNA recombination by continuous HJ branch migration. Branch migration allows RuvC to scan DNA until it finds its consensus sequence, where it cleaves and resolves cruciform DNA. This is Holliday junction branch migration complex subunit RuvB from Shigella sonnei (strain Ss046).